Here is a 1622-residue protein sequence, read N- to C-terminus: Ferredoxin-dependent glutamate synthase 1, chloroplastic/mitochondrial (1622 aa).

A chloroplast and mitochondrion-targeting transit peptide spans 1–105 (MAMQSLSPVP…LEDILSERGA (105 aa)). C106 (for GATase activity) is an active-site residue. In terms of domain architecture, Glutamine amidotransferase type-2 spans 106 to 505 (CGVGFIANLD…PGMMIAVDLV (400 aa)). An FMN-binding site is contributed by 1184 to 1241 (LTETHQTLIANGLRERVILRVDGGLKSGVDVLMAAAMGADEYGFGSLAMIATGCVMAR). Residues C1237, C1243, and C1248 each contribute to the [3Fe-4S] cluster site.

It belongs to the glutamate synthase family. Interacts with SHM1. [3Fe-4S] cluster serves as cofactor. It depends on FAD as a cofactor. FMN is required as a cofactor. As to expression, highly expressed in leaves. High expression in the leaf mesophyll and phloem companion cell-sieve element complex.

The protein resides in the plastid. Its subcellular location is the chloroplast stroma. It localises to the mitochondrion matrix. The catalysed reaction is 2 oxidized [2Fe-2S]-[ferredoxin] + 2 L-glutamate = L-glutamine + 2 reduced [2Fe-2S]-[ferredoxin] + 2-oxoglutarate + 2 H(+). It functions in the pathway amino-acid biosynthesis; L-glutamate biosynthesis via GLT pathway; L-glutamate from 2-oxoglutarate and L-glutamine (ferredoxin route): step 1/1. It participates in energy metabolism; nitrogen metabolism. In terms of biological role, involved in glutamate biosynthesis in leaf. Required for the reassimilation of ammonium ions generated during photorespiration. The polypeptide is Ferredoxin-dependent glutamate synthase 1, chloroplastic/mitochondrial (Arabidopsis thaliana (Mouse-ear cress)).